The primary structure comprises 356 residues: Uroporphyrinogen decarboxylase (356 aa).

Substrate-binding positions include 27 to 31 (RQAGR), aspartate 77, tyrosine 154, threonine 209, and histidine 327.

This sequence belongs to the uroporphyrinogen decarboxylase family. In terms of assembly, homodimer.

Its subcellular location is the cytoplasm. It carries out the reaction uroporphyrinogen III + 4 H(+) = coproporphyrinogen III + 4 CO2. Its pathway is porphyrin-containing compound metabolism; protoporphyrin-IX biosynthesis; coproporphyrinogen-III from 5-aminolevulinate: step 4/4. In terms of biological role, catalyzes the decarboxylation of four acetate groups of uroporphyrinogen-III to yield coproporphyrinogen-III. The protein is Uroporphyrinogen decarboxylase of Hahella chejuensis (strain KCTC 2396).